The primary structure comprises 45 residues: Small, acid-soluble spore protein P (45 aa).

Positions 1–12 (MTERHTAKDIRK) are enriched in basic and acidic residues. A disordered region spans residues 1-45 (MTERHTAKDIRKNAPKGENPGQPEPLSGSKKVKKRNHVSQTNGEG).

It belongs to the SspP family.

Its subcellular location is the spore core. In Halalkalibacterium halodurans (strain ATCC BAA-125 / DSM 18197 / FERM 7344 / JCM 9153 / C-125) (Bacillus halodurans), this protein is Small, acid-soluble spore protein P.